The sequence spans 281 residues: Ribosomal RNA small subunit methyltransferase A (281 aa).

Asn24, Leu26, Gly51, Glu72, Asp96, and Asn123 together coordinate S-adenosyl-L-methionine.

It belongs to the class I-like SAM-binding methyltransferase superfamily. rRNA adenine N(6)-methyltransferase family. RsmA subfamily.

It localises to the cytoplasm. It catalyses the reaction adenosine(1518)/adenosine(1519) in 16S rRNA + 4 S-adenosyl-L-methionine = N(6)-dimethyladenosine(1518)/N(6)-dimethyladenosine(1519) in 16S rRNA + 4 S-adenosyl-L-homocysteine + 4 H(+). Specifically dimethylates two adjacent adenosines (A1518 and A1519) in the loop of a conserved hairpin near the 3'-end of 16S rRNA in the 30S particle. May play a critical role in biogenesis of 30S subunits. In Ureaplasma urealyticum serovar 10 (strain ATCC 33699 / Western), this protein is Ribosomal RNA small subunit methyltransferase A.